A 106-amino-acid polypeptide reads, in one-letter code: Urease subunit beta (106 aa).

Belongs to the urease beta subunit family. As to quaternary structure, heterotrimer of UreA (gamma), UreB (beta) and UreC (alpha) subunits. Three heterotrimers associate to form the active enzyme.

It is found in the cytoplasm. The catalysed reaction is urea + 2 H2O + H(+) = hydrogencarbonate + 2 NH4(+). It functions in the pathway nitrogen metabolism; urea degradation; CO(2) and NH(3) from urea (urease route): step 1/1. The chain is Urease subunit beta from Acinetobacter baumannii (strain SDF).